The following is a 382-amino-acid chain: Protein arginine N-methyltransferase PRMT10 (382 aa).

A disordered region spans residues 1–21 (MASLPNGAASASAASSAAGGG). A compositionally biased stretch (low complexity) spans 7–17 (GAASASAASSA). The region spanning 28-359 (EVDFANYFCT…KENHRLMDME (332 aa)) is the SAM-dependent MTase PRMT-type domain. Catalysis depends on residues Glu-142 and Glu-151. The interval 189-229 (ENKMEDLEIAMHDWNLFVEDTESYYGVNMNVLTKAYRAEHE) is dimerization arm.

This sequence belongs to the class I-like SAM-binding methyltransferase superfamily. Protein arginine N-methyltransferase family. In terms of assembly, ring-like homodimer.

The enzyme catalyses L-arginyl-[protein] + 2 S-adenosyl-L-methionine = N(omega),N(omega)-dimethyl-L-arginyl-[protein] + 2 S-adenosyl-L-homocysteine + 2 H(+). Methylates (mono and asymmetric dimethylation) the guanidino nitrogens of arginyl residues in some proteins. This Oryza sativa subsp. indica (Rice) protein is Protein arginine N-methyltransferase PRMT10 (PRMT10).